The sequence spans 269 residues: Tryptophan synthase alpha chain (269 aa).

Catalysis depends on proton acceptor residues Glu49 and Asp60.

It belongs to the TrpA family. Tetramer of two alpha and two beta chains.

It carries out the reaction (1S,2R)-1-C-(indol-3-yl)glycerol 3-phosphate + L-serine = D-glyceraldehyde 3-phosphate + L-tryptophan + H2O. Its pathway is amino-acid biosynthesis; L-tryptophan biosynthesis; L-tryptophan from chorismate: step 5/5. Its function is as follows. The alpha subunit is responsible for the aldol cleavage of indoleglycerol phosphate to indole and glyceraldehyde 3-phosphate. This chain is Tryptophan synthase alpha chain, found in Salmonella arizonae (strain ATCC BAA-731 / CDC346-86 / RSK2980).